Reading from the N-terminus, the 375-residue chain is Solute carrier family 35 member F2 (375 aa).

Met1 is subject to N-acetylmethionine. Phosphoserine occurs at positions 5, 22, 25, and 28. 10 consecutive transmembrane segments (helical) span residues 39 to 59 (ILKT…TAIT), 73 to 93 (MLQS…MLAF), 108 to 126 (WWKY…YLIV), 136 to 156 (SVQL…WFIL), 165 to 185 (FIAV…DILA), 195 to 215 (VLIG…SNVC), 227 to 247 (EFLG…LLIV), 263 to 283 (LLFV…PLVI), 290 to 310 (SVNL…LFLF), and 314 to 334 (FSGL…LYCS). A Phosphoserine modification is found at Ser372.

The protein belongs to the SLC35F solute transporter family.

It is found in the membrane. Putative solute transporter. The sequence is that of Solute carrier family 35 member F2 (Slc35f2) from Mus musculus (Mouse).